The primary structure comprises 528 residues: GMP synthase [glutamine-hydrolyzing] (528 aa).

A Glutamine amidotransferase type-1 domain is found at 3-199 (KVAIIDFGSQ…FLDIAGCQKD (197 aa)). The active-site Nucleophile is Cys-83. Active-site residues include His-174 and Glu-176. The 195-residue stretch at 200–394 (WTVTSFIDDQ…LGISTEILMR (195 aa)) folds into the GMPS ATP-PPase domain. ATP is bound at residue 227-233 (SGGVDSS).

As to quaternary structure, homodimer.

The enzyme catalyses XMP + L-glutamine + ATP + H2O = GMP + L-glutamate + AMP + diphosphate + 2 H(+). Its pathway is purine metabolism; GMP biosynthesis; GMP from XMP (L-Gln route): step 1/1. In terms of biological role, catalyzes the synthesis of GMP from XMP. The polypeptide is GMP synthase [glutamine-hydrolyzing] (Ehrlichia ruminantium (strain Welgevonden)).